The following is a 571-amino-acid chain: Coiled-coil domain-containing protein 22 homolog (571 aa).

Coiled coils occupy residues 406–434 (MMDL…SRTA) and 509–571 (CAEL…AHLR).

This sequence belongs to the CCDC22 family.

This chain is Coiled-coil domain-containing protein 22 homolog, found in Culex quinquefasciatus (Southern house mosquito).